We begin with the raw amino-acid sequence, 166 residues long: 2-C-methyl-D-erythritol 2,4-cyclodiphosphate synthase (166 aa).

Residues Asp-12 and His-14 each coordinate a divalent metal cation. 4-CDP-2-C-methyl-D-erythritol 2-phosphate contacts are provided by residues 12-14 (DVH) and 38-39 (HS). His-46 is a binding site for a divalent metal cation. 4-CDP-2-C-methyl-D-erythritol 2-phosphate contacts are provided by residues 60–62 (DIG), 136–139 (TTSE), Phe-143, and Arg-146.

The protein belongs to the IspF family. In terms of assembly, homotrimer. It depends on a divalent metal cation as a cofactor.

The enzyme catalyses 4-CDP-2-C-methyl-D-erythritol 2-phosphate = 2-C-methyl-D-erythritol 2,4-cyclic diphosphate + CMP. The protein operates within isoprenoid biosynthesis; isopentenyl diphosphate biosynthesis via DXP pathway; isopentenyl diphosphate from 1-deoxy-D-xylulose 5-phosphate: step 4/6. Involved in the biosynthesis of isopentenyl diphosphate (IPP) and dimethylallyl diphosphate (DMAPP), two major building blocks of isoprenoid compounds. Catalyzes the conversion of 4-diphosphocytidyl-2-C-methyl-D-erythritol 2-phosphate (CDP-ME2P) to 2-C-methyl-D-erythritol 2,4-cyclodiphosphate (ME-CPP) with a corresponding release of cytidine 5-monophosphate (CMP). The polypeptide is 2-C-methyl-D-erythritol 2,4-cyclodiphosphate synthase (Xanthomonas axonopodis pv. citri (strain 306)).